The sequence spans 1070 residues: uncharacterized protein (1070 aa).

A UBA domain is found at 477–523 (LIDTNQLLLRQLQQIVKLGIFNEKKIKEELKANKFNEQVALQILESE).

This is an uncharacterized protein from Sulfolobus islandicus rod-shaped virus 1 (SIRV-1).